The primary structure comprises 278 residues: Putative peptidase Cgl1093 (278 aa).

The signal sequence occupies residues 1–32; sequence MSSASFTTKALSVLAALTAASAPLVAASPAHA. The 204-residue stretch at 33–236 folds into the Peptidase S1 domain; it reads LANARNVTGS…HAEWIAYYTG (204 aa). A disulfide bridge links cysteine 59 with cysteine 75. Catalysis depends on charge relay system residues histidine 74, aspartate 123, and serine 189.

This sequence belongs to the peptidase S1 family.

The protein localises to the secreted. This is Putative peptidase Cgl1093 from Corynebacterium glutamicum (strain ATCC 13032 / DSM 20300 / JCM 1318 / BCRC 11384 / CCUG 27702 / LMG 3730 / NBRC 12168 / NCIMB 10025 / NRRL B-2784 / 534).